A 203-amino-acid polypeptide reads, in one-letter code: 8-oxoguanine DNA glycosylase/AP lyase (203 aa).

Residues lysine 128 and aspartate 146 contribute to the active site.

The protein belongs to the type-2 OGG1 family.

It catalyses the reaction 2'-deoxyribonucleotide-(2'-deoxyribose 5'-phosphate)-2'-deoxyribonucleotide-DNA = a 3'-end 2'-deoxyribonucleotide-(2,3-dehydro-2,3-deoxyribose 5'-phosphate)-DNA + a 5'-end 5'-phospho-2'-deoxyribonucleoside-DNA + H(+). In terms of biological role, catalyzes the excision of an oxidatively damaged form of guanine (7,8-dihydro-8-oxoguanine = 8-oxoG) from DNA. Also cleaves the DNA backbone at apurinic/apyrimidinic sites (AP sites). The protein is 8-oxoguanine DNA glycosylase/AP lyase of Sulfolobus acidocaldarius (strain ATCC 33909 / DSM 639 / JCM 8929 / NBRC 15157 / NCIMB 11770).